The chain runs to 509 residues: Cytochrome P450 4A10 (509 aa).

The next 2 helical transmembrane spans lie at 11–31 and 121–141; these read FTGS…LLLL and LLAP…WFQH. Position 320 (glutamate 320) interacts with heme. Serine 439 is modified (phosphoserine). Residue cysteine 456 coordinates heme.

The protein belongs to the cytochrome P450 family. Requires heme as cofactor. In terms of tissue distribution, expressed in liver (at protein level) and kidney (at protein level).

Its subcellular location is the endoplasmic reticulum membrane. The protein localises to the microsome membrane. The catalysed reaction is an omega-methyl-long-chain fatty acid + reduced [NADPH--hemoprotein reductase] + O2 = an omega-hydroxy-long-chain fatty acid + oxidized [NADPH--hemoprotein reductase] + H2O + H(+). The enzyme catalyses dodecanoate + reduced [NADPH--hemoprotein reductase] + O2 = 12-hydroxydodecanoate + oxidized [NADPH--hemoprotein reductase] + H2O + H(+). It carries out the reaction dodecanoate + reduced [NADPH--hemoprotein reductase] + O2 = 11-hydroxydodecanoate + oxidized [NADPH--hemoprotein reductase] + H2O + H(+). It catalyses the reaction tetradecanoate + reduced [NADPH--hemoprotein reductase] + O2 = 14-hydroxytetradecanoate + oxidized [NADPH--hemoprotein reductase] + H2O + H(+). The catalysed reaction is hexadecanoate + reduced [NADPH--hemoprotein reductase] + O2 = 16-hydroxyhexadecanoate + oxidized [NADPH--hemoprotein reductase] + H2O + H(+). The enzyme catalyses (9Z)-octadecenoate + reduced [NADPH--hemoprotein reductase] + O2 = 18-hydroxy-(9Z)-octadecenoate + oxidized [NADPH--hemoprotein reductase] + H2O + H(+). It carries out the reaction (9Z,12Z)-octadecadienoate + reduced [NADPH--hemoprotein reductase] + O2 = 18-hydroxy-(9Z,12Z)-octadecadienoate + oxidized [NADPH--hemoprotein reductase] + H2O + H(+). It catalyses the reaction (9Z,12Z)-octadecadienoate + reduced [NADPH--hemoprotein reductase] + O2 = 17-hydroxy-(9Z,12Z)-octadecadienoate + oxidized [NADPH--hemoprotein reductase] + H2O + H(+). The catalysed reaction is (5Z,8Z,11Z,14Z)-eicosatetraenoate + reduced [NADPH--hemoprotein reductase] + O2 = 20-hydroxy-(5Z,8Z,11Z,14Z)-eicosatetraenoate + oxidized [NADPH--hemoprotein reductase] + H2O + H(+). The enzyme catalyses 8,9-epoxy-(5Z,11Z,14Z)-eicosatrienoate + reduced [NADPH--hemoprotein reductase] + O2 = 20-hydroxy-8,9-epoxy-(5Z,11Z,14Z)-eicosatrienoate + oxidized [NADPH--hemoprotein reductase] + H2O + H(+). In terms of biological role, a cytochrome P450 monooxygenase involved in the metabolism of fatty acids. Catalyzes predominantly the oxidation of the terminal carbon (omega-oxidation) of long-chain fatty acids. Acts as a major omega-hydroxylase for dodecanoic (lauric) acid in liver. In kidney, may play an important role in omega-hydroxylation of (5Z,8Z,11Z,14Z)-eicosatetraenoic acid (arachidonate) to 20-hydroxyeicosatetraenoic acid (20-HETE), a signaling molecule acting both as vasoconstrictive and natriuretic with overall effect on arterial blood pressure. Also participates in the formation of anti-inflammatory hydroxyepoxyeicosatrienoic acids (HEETs) in kidney by converting 8,9-epoxyeicosatrienoic acid (EET) to 20,8,9-HEET, an activator of PPARA. Displays substantially lower fatty acid omega-1 hydroxylase activity. Mechanistically, uses molecular oxygen inserting one oxygen atom into a substrate, and reducing the second into a water molecule, with two electrons provided by NADPH via cytochrome P450 reductase (CPR; NADPH-ferrihemoprotein reductase). In Rattus norvegicus (Rat), this protein is Cytochrome P450 4A10 (Cyp4a10).